The primary structure comprises 194 residues: Probable GTP-binding protein EngB (194 aa).

The region spanning 22–194 (DLPEYALAGR…AWQFIKEGME (173 aa)) is the EngB-type G domain. GTP contacts are provided by residues 30–37 (GRSNVGKS), 57–61 (GKTQT), 75–78 (DVPG), 142–145 (TKAD), and 174–176 (FSS). Mg(2+)-binding residues include serine 37 and threonine 59.

It belongs to the TRAFAC class TrmE-Era-EngA-EngB-Septin-like GTPase superfamily. EngB GTPase family. It depends on Mg(2+) as a cofactor.

In terms of biological role, necessary for normal cell division and for the maintenance of normal septation. This Listeria monocytogenes serovar 1/2a (strain ATCC BAA-679 / EGD-e) protein is Probable GTP-binding protein EngB.